The primary structure comprises 599 residues: Glucose-6-phosphate 1-dehydrogenase 3, chloroplastic (599 aa).

Positions 1-18 (MSSLSCPTYRSRTSSSSP) are enriched in low complexity. The disordered stretch occupies residues 1 to 23 (MSSLSCPTYRSRTSSSSPFLSNH). Residues 1-66 (MSSLSCPTYR…RSQRRSVQSS (66 aa)) constitute a chloroplast transit peptide. An N-acetylvaline modification is found at Val-67. NADP(+) contacts are provided by residues 119 to 126 (GASGDLAK) and Arg-153. Cys-171 and Cys-179 form a disulfide bridge. NADP(+) is bound at residue Lys-256. Residues Lys-256, 286–290 (HYLGK), Glu-324, and Asp-343 contribute to the D-glucose 6-phosphate site. The Proton acceptor role is filled by His-348. Lys-441 is a binding site for NADP(+). 2 residues coordinate D-glucose 6-phosphate: Lys-444 and Arg-449. Residues Arg-454 and Arg-483 each coordinate NADP(+). Gln-485 lines the D-glucose 6-phosphate pocket. NADP(+) contacts are provided by residues 491-493 (YLK) and Arg-576.

It belongs to the glucose-6-phosphate dehydrogenase family. As to quaternary structure, forms homodimer. Interacts with G6PD1. As to expression, expressed in roots, flowers and siliques.

The protein resides in the plastid. The protein localises to the chloroplast stroma. The catalysed reaction is D-glucose 6-phosphate + NADP(+) = 6-phospho-D-glucono-1,5-lactone + NADPH + H(+). Its pathway is carbohydrate degradation; pentose phosphate pathway; D-ribulose 5-phosphate from D-glucose 6-phosphate (oxidative stage): step 1/3. Regulated by metabolites. Post-translationally inactivated by cysteine-mediated redox modification via the ferredoxin-thioredoxin system in the light and this avoids futile cycles with photosynthetic CO2 fixation. Catalyzes the rate-limiting step of the oxidative pentose-phosphate pathway, which represents a route for the dissimilation of carbohydrates besides glycolysis. The main function of this enzyme is to provide reducing power (NADPH) and pentose phosphates for fatty acid and nucleic acid synthesis which are involved in membrane synthesis and cell division. The chain is Glucose-6-phosphate 1-dehydrogenase 3, chloroplastic from Arabidopsis thaliana (Mouse-ear cress).